The primary structure comprises 428 residues: Flotillin-2 (428 aa).

Residue G2 is the site of N-myristoyl glycine attachment. A lipid anchor (S-palmitoyl cysteine; by ZDHHC5) is attached at C4. C19 carries S-palmitoyl cysteine lipidation. Residue C20 is the site of S-palmitoyl cysteine; by ZDHHC5 attachment. S405 carries the post-translational modification Phosphoserine.

It belongs to the band 7/mec-2 family. Flotillin subfamily. Heterooligomeric complex of flotillin-1 and flotillin-2 and caveolin-1 and caveolin-2. Interacts with ECPAS. Post-translationally, ZDHHC5-catalyzed palmitoylation may be required for the formation of higher-order complexes and for neurite outgrowth in cultured neural stem cells. Expressed in many tissues, including suprabasal epidermis, hair follicles, heart, lung, thymus, spleen, liver, kidney and brain. Not expressed in skeletal muscle.

The protein localises to the cell membrane. Its subcellular location is the membrane. It localises to the caveola. The protein resides in the endosome. Functionally, may act as a scaffolding protein within caveolar membranes, functionally participating in formation of caveolae or caveolae-like vesicles. May be involved in epidermal cell adhesion and epidermal structure and function. This is Flotillin-2 (Flot2) from Mus musculus (Mouse).